Consider the following 161-residue polypeptide: Small heat shock protein hspJ (161 aa).

In terms of domain architecture, sHSP spans 52–161 (SKFTSLNPKL…FEKEIKINIE (110 aa)).

This sequence belongs to the small heat shock protein (HSP20) family.

This Dictyostelium discoideum (Social amoeba) protein is Small heat shock protein hspJ (hspJ).